The chain runs to 414 residues: 3-aminobutyryl-CoA aminotransferase (414 aa).

An N6-(pyridoxal phosphate)lysine modification is found at K261.

Belongs to the class-III pyridoxal-phosphate-dependent aminotransferase family. Homodimer. Pyridoxal 5'-phosphate serves as cofactor.

The enzyme catalyses (3S)-3-aminobutanoyl-CoA + 2-oxoglutarate = acetoacetyl-CoA + L-glutamate. It participates in amino-acid degradation; L-lysine degradation via acetate pathway. Functionally, 3-aminobutyryl-CoA aminotransferase that acts specifically on coenzyme A (CoA) esters and catalyzes the conversion of 3-aminobutyryl-CoA into acetoacetyl-CoA in an alternative pathway of lysine fermentation. The chain is 3-aminobutyryl-CoA aminotransferase (kat) from Cloacimonas acidaminovorans (strain Evry).